A 309-amino-acid chain; its full sequence is Fructosamine-3-kinase (309 aa).

Met1 bears the N-acetylmethionine mark. Residue 89 to 91 (EHL) participates in ATP binding. The Proton acceptor role is filled by Asp217.

Belongs to the fructosamine kinase family. In terms of assembly, monomer. In terms of tissue distribution, expressed in red blood cells, brain, heart, kidney and muscle. Lower expression is observed in liver. Not expressed in lung, spleen, testis and thymus.

It catalyses the reaction N(6)-(D-fructosyl)-L-lysyl-[protein] + ATP = N(6)-(3-O-phospho-D-fructosyl)-L-lysyl-[protein] + ADP + H(+). The enzyme catalyses N(6)-D-ribulosyl-L-lysyl-[protein] + ATP = N(6)-(3-O-phospho-D-ribulosyl)-L-lysyl-[protein] + ADP + H(+). The catalysed reaction is N(6)-(D-psicosyl)-L-lysyl-[protein] + ATP = N(6)-(3-O-phospho-D-psicosyl)-L-lysyl-[protein] + ADP + H(+). Its function is as follows. Fructosamine-3-kinase involved in protein deglycation by mediating phosphorylation of fructoselysine residues on glycated proteins, to generate fructoselysine-3 phosphate. Fructoselysine-3 phosphate adducts are unstable and decompose under physiological conditions. Involved in intracellular deglycation in erythrocytes and pancreatic islets. Involved in the response to oxidative stress by mediating deglycation of NFE2L2/NRF2, glycation impairing NFE2L2/NRF2 function. Also able to phosphorylate psicosamines and ribulosamines. The protein is Fructosamine-3-kinase of Mus musculus (Mouse).